A 60-amino-acid polypeptide reads, in one-letter code: Sec-independent protein translocase protein TatA (60 aa).

The helical transmembrane segment at 1-21 (MTPAGPAQLLIVALVVIVLFG) threads the bilayer.

Belongs to the TatA/E family. In terms of assembly, the Tat system comprises two distinct complexes: a TatABC complex, containing multiple copies of TatA, TatB and TatC subunits, and a separate TatA complex, containing only TatA subunits. Substrates initially bind to the TatABC complex, which probably triggers association of the separate TatA complex to form the active translocon.

Its subcellular location is the cell membrane. Its function is as follows. Part of the twin-arginine translocation (Tat) system that transports large folded proteins containing a characteristic twin-arginine motif in their signal peptide across membranes. TatA could form the protein-conducting channel of the Tat system. The polypeptide is Sec-independent protein translocase protein TatA (Corynebacterium glutamicum (strain R)).